Consider the following 297-residue polypeptide: rRNA 2'-O-methyltransferase fibrillarin (297 aa).

The disordered stretch occupies residues 1 to 56 (MRGGFGRGGGGRGGSRGGRGGFGRGGGRGGGRGGGRGGGRGGGRGGGRGGGRGGAG). Residues R2, R7, R12, R16, R19, R24, R28, R32, R36, R40, R44, R48, and R52 each carry the asymmetric dimethylarginine modification. Residues 149-150 (TT), 168-169 (EF), 192-193 (DA), and 212-215 (DVAQ) each bind S-adenosyl-L-methionine.

The protein belongs to the methyltransferase superfamily. Fibrillarin family. As to quaternary structure, component of box C/D small nucleolar ribonucleoprotein (snoRNP) particles. It is associated with the U3, U8 and U13 small nuclear RNAs. In terms of processing, by homology to other fibrillarins, some or all of the N-terminal domain arginines are modified to asymmetric dimethylarginine (DMA).

It is found in the nucleus. The protein resides in the nucleolus. It carries out the reaction L-glutaminyl-[histone H2A] + S-adenosyl-L-methionine = N(5)-methyl-L-glutaminyl-[histone H2A] + S-adenosyl-L-homocysteine + H(+). S-adenosyl-L-methionine-dependent methyltransferase that has the ability to methylate both RNAs and proteins. Involved in pre-rRNA processing. Utilizes the methyl donor S-adenosyl-L-methionine to catalyze the site-specific 2'-hydroxyl methylation of ribose moieties in pre-ribosomal RNA. Site specificity is provided by a guide RNA that base pairs with the substrate. Methylation occurs at a characteristic distance from the sequence involved in base pairing with the guide RNA. Also acts as a protein methyltransferase by mediating methylation of 'Gln-105' of histone H2A (H2AQ105me), a modification that impairs binding of the FACT complex and is specifically present at 35S ribosomal DNA locus. The protein is rRNA 2'-O-methyltransferase fibrillarin of Leishmania major.